The chain runs to 190 residues: LIM domain-containing protein WLIM1 (190 aa).

Position 2 is an N-acetylalanine (A2). An LIM zinc-binding 1 domain is found at 8 to 68 (QKCMACDKTV…RPHFDQNFKR (61 aa)). The interval 74-98 (KSFEGTPKIGKPDRPLEGERPAGTK) is disordered. The span at 83–95 (GKPDRPLEGERPA) shows a compositional bias: basic and acidic residues. The 61-residue stretch at 108 to 168 (EKCVGCDKTV…KHHHIQLIKE (61 aa)) folds into the LIM zinc-binding 2 domain.

Interacts with F-actin. In terms of tissue distribution, expressed in roots, leaves, stems, flowers and siliques. Not detected in pollen.

It is found in the cytoplasm. Its subcellular location is the cytoskeleton. Functionally, binds to actin filaments and promotes cross-linking into thick bundles. Has an actin-stabilizing activity. The actin regulatory activities are not regulated by pH and [Ca(2+)]. The protein is LIM domain-containing protein WLIM1 of Arabidopsis thaliana (Mouse-ear cress).